The chain runs to 586 residues: Phosphomethylpyrimidine synthase (586 aa).

A disordered region spans residues 1 to 59 (MKQSVSAEQIELKSSLPGSKKVYVDGPREGMKVPMREIEQSDTNGVPNPPIRVYDTSGP). The span at 22 to 39 (VYVDGPREGMKVPMREIE) shows a compositional bias: basic and acidic residues. Substrate is bound by residues Asn193, Met222, Tyr251, His287, 307–309 (SRG), 348–351 (DGLR), and Glu387. His391 contributes to the Zn(2+) binding site. Residue Tyr414 participates in substrate binding. Zn(2+) is bound at residue His455. The [4Fe-4S] cluster site is built by Cys535, Cys538, and Cys543.

It belongs to the ThiC family. [4Fe-4S] cluster serves as cofactor.

It carries out the reaction 5-amino-1-(5-phospho-beta-D-ribosyl)imidazole + S-adenosyl-L-methionine = 4-amino-2-methyl-5-(phosphooxymethyl)pyrimidine + CO + 5'-deoxyadenosine + formate + L-methionine + 3 H(+). The protein operates within cofactor biosynthesis; thiamine diphosphate biosynthesis. Functionally, catalyzes the synthesis of the hydroxymethylpyrimidine phosphate (HMP-P) moiety of thiamine from aminoimidazole ribotide (AIR) in a radical S-adenosyl-L-methionine (SAM)-dependent reaction. This Bacillus cereus (strain ATCC 10987 / NRS 248) protein is Phosphomethylpyrimidine synthase.